A 341-amino-acid chain; its full sequence is Serine/threonine-protein kinase-like protein At5g23170 (341 aa).

The region spanning 16–298 (FSPSKLIGKG…FGEITAEIVA (283 aa)) is the Protein kinase domain. Residues 22–30 (IGKGSHGYV) and K51 contribute to the ATP site. The disordered stretch occupies residues 52-75 (TPSSLSPSSPSSSSSSKSEQTKKL). Positions 53–69 (PSSLSPSSPSSSSSSKS) are enriched in low complexity. D153 serves as the catalytic Proton acceptor. Residues 311–332 (MSVLRRVVKLKRRKKRLRETLT) are a coiled coil.

Belongs to the protein kinase superfamily. Ser/Thr protein kinase family. As to expression, ubiquitous. Higher expression in mature stamina and pollen.

The catalysed reaction is L-seryl-[protein] + ATP = O-phospho-L-seryl-[protein] + ADP + H(+). It carries out the reaction L-threonyl-[protein] + ATP = O-phospho-L-threonyl-[protein] + ADP + H(+). The sequence is that of Serine/threonine-protein kinase-like protein At5g23170 from Arabidopsis thaliana (Mouse-ear cress).